Reading from the N-terminus, the 126-residue chain is Fatty acid-binding protein 1, liver (126 aa).

The protein belongs to the calycin superfamily. Fatty-acid binding protein (FABP) family.

It is found in the cytoplasm. Functionally, binds free fatty acids and their coenzyme A derivatives, bilirubin, and some other small molecules in the cytoplasm. May be involved in intracellular lipid transport. The specificity of axolotl L-FABP differs from that of LB-FABP. This Ambystoma mexicanum (Axolotl) protein is Fatty acid-binding protein 1, liver.